The following is a 164-amino-acid chain: 3-isopropylmalate dehydratase small subunit (164 aa).

Belongs to the LeuD family. LeuD type 2 subfamily. As to quaternary structure, heterodimer of LeuC and LeuD.

The catalysed reaction is (2R,3S)-3-isopropylmalate = (2S)-2-isopropylmalate. It functions in the pathway amino-acid biosynthesis; L-leucine biosynthesis; L-leucine from 3-methyl-2-oxobutanoate: step 2/4. In terms of biological role, catalyzes the isomerization between 2-isopropylmalate and 3-isopropylmalate, via the formation of 2-isopropylmaleate. This chain is 3-isopropylmalate dehydratase small subunit, found in Lachnospira eligens (strain ATCC 27750 / DSM 3376 / VPI C15-48 / C15-B4) (Eubacterium eligens).